The sequence spans 950 residues: Synaptotagmin-like protein 2 (950 aa).

In terms of domain architecture, RabBD spans 1–57 (MIDLSFLTEEEQDAILKVLQRDAALKRAEEERVRHLPEKIKDDQQLKNMSGQWFYEA). 3 disordered regions span residues 78-98 (RKKL…AKES), 116-289 (VEEP…ETLR), and 361-620 (ESDQ…SSSG). A compositionally biased stretch (basic and acidic residues) spans 87–97 (QNKDTAMRAKE). Polar residues-rich tracts occupy residues 140-150 (IDMSQESTRTP) and 173-183 (LQQTKPEQSKT). Residues 193–205 (KEGELSESKEKSS) show a composition bias toward basic and acidic residues. Residues 219-230 (QTVSTEPENASH) are compositionally biased toward polar residues. Positions 246 to 264 (NDLEKDDNQSFPRQRRDSL) are enriched in basic and acidic residues. Positions 434 to 445 (VESSSVINGQQE) are enriched in polar residues. 2 stretches are compositionally biased toward basic and acidic residues: residues 479-502 (HSFR…LERR) and 531-544 (ELVR…KADQ). Polar residues predominate over residues 557 to 567 (TVPSLPDNQFS). The segment covering 608 to 620 (SPSSLTNLSSSSG) has biased composition (low complexity). C2 domains lie at 644–769 (VKGS…LKWY) and 784–913 (NRGE…VDWM).

As to quaternary structure, monomer. Binds NRXN1. Binds RAB27A that has been activated by GTP-binding. Interacts with RAB27B. Post-translationally, isoform 1 is highly susceptible to proteolytic degradation and is stabilized by the interaction with RAB27A. Highly expressed in brain, lung, kidney, testis and in embryos after day 7. Detected at lower levels in skeletal muscle. Expressed in pancreatic alpha cells. Isoform 6 is highly expressed in brain, but not detectable in the other tissues tested. Isoform 1 is expressed abundantly in the stomach and is predominantly localized at the apical region of gastric-surface mucus cells. Isoform 11 is expressed in cytotoxic T-lymphocytes (CTL).

The protein localises to the melanosome membrane. It is found in the cell membrane. In terms of biological role, isoform 11 acts as a RAB27A effector protein and plays a role in cytotoxic granule exocytosis in lymphocytes. Required for cytotoxic granule docking at the immunologic synapse. Isoform 1 may play a role in melanosome transport and vesicle trafficking. It controls melanosome distribution in the cell periphery and regulates melanocyte morphology. Isoform 1 acts as a positive mediator of mucus secretion by the surface mucus cells of the stomach. Mediates basal mucus secretion by gastric surface cells by promoting the proper granule biognesis and docking of mucus granules with the apical plasma membrane. The polypeptide is Synaptotagmin-like protein 2 (Sytl2) (Mus musculus (Mouse)).